The sequence spans 436 residues: AP-2 complex subunit mu-B (436 aa).

One can recognise an MHD domain in the interval 170-435; sequence RNELFLDVLE…IGRSGIYETR (266 aa). Residues Lys342, Lys346, and Lys355 each coordinate a 1,2-diacyl-sn-glycero-3-phospho-(1D-myo-inositol-3,4,5-trisphosphate).

Belongs to the adaptor complexes medium subunit family. Adaptor protein complex 2 (AP-2) is a heterotetramer composed of two large adaptins (alpha-type subunit and beta-type subunit), a medium adaptin (mu-type subunit) and a small adaptin (sigma-type subunit).

It localises to the cell membrane. It is found in the membrane. Its subcellular location is the coated pit. Its function is as follows. Component of the adaptor complexes which link clathrin to receptors in coated vesicles. Clathrin-associated protein complexes are believed to interact with the cytoplasmic tails of membrane proteins, leading to their selection and concentration. AP50 is a subunit of the plasma membrane adaptor. The complex binds polyphosphoinositide-containing lipids. This is AP-2 complex subunit mu-B (ap2m1b) from Danio rerio (Zebrafish).